A 234-amino-acid polypeptide reads, in one-letter code: Small ribosomal subunit protein uS10m (234 aa).

A mitochondrion-targeting transit peptide spans 1-23 (MLRIGYRGFSTRSRVFKLSPQEY).

This sequence belongs to the universal ribosomal protein uS10 family. Component of the mitochondrial small ribosomal subunit (mt-SSU).

It localises to the mitochondrion. Component of the mitochondrial ribosome (mitoribosome), a dedicated translation machinery responsible for the synthesis of mitochondrial genome-encoded proteins, including at least some of the essential transmembrane subunits of the mitochondrial respiratory chain. The mitoribosomes are attached to the mitochondrial inner membrane and translation products are cotranslationally integrated into the membrane. The protein is Small ribosomal subunit protein uS10m (RSM10) of Candida albicans (strain SC5314 / ATCC MYA-2876) (Yeast).